A 123-amino-acid polypeptide reads, in one-letter code: Transmembrane protein 254 (123 aa).

A run of 3 helical transmembrane segments spans residues 15–35 (LFWFTVITVSFGYYTWAVFWP), 63–83 (NGYWLAWLIHVGESLYALVLC), and 95–115 (LLWFLQTFLFGVASLSILIAY).

It localises to the membrane. In Mus musculus (Mouse), this protein is Transmembrane protein 254.